The sequence spans 214 residues: Putative glucose-6-phosphate isomerase 1 (214 aa).

Positions 92, 94, 101, and 140 each coordinate Fe cation.

It belongs to the archaeal-type GPI family. In terms of assembly, homodimer. The cofactor is Fe cation.

It localises to the cytoplasm. It catalyses the reaction alpha-D-glucose 6-phosphate = beta-D-fructose 6-phosphate. It functions in the pathway carbohydrate degradation; glycolysis; D-glyceraldehyde 3-phosphate and glycerone phosphate from D-glucose: step 2/4. This Rhizobium meliloti (strain 1021) (Ensifer meliloti) protein is Putative glucose-6-phosphate isomerase 1 (pgiA1).